Consider the following 209-residue polypeptide: Large ribosomal subunit protein uL3 (209 aa).

This sequence belongs to the universal ribosomal protein uL3 family. As to quaternary structure, part of the 50S ribosomal subunit. Forms a cluster with proteins L14 and L19.

In terms of biological role, one of the primary rRNA binding proteins, it binds directly near the 3'-end of the 23S rRNA, where it nucleates assembly of the 50S subunit. This Brevibacillus brevis (strain 47 / JCM 6285 / NBRC 100599) protein is Large ribosomal subunit protein uL3.